Here is a 35-residue protein sequence, read N- to C-terminus: Peptide Hact-3 (35 aa).

In terms of tissue distribution, expressed in tentacles.

The protein resides in the nematocyst. It localises to the secreted. Functionally, peptide with unknown function. Does not exhibit antimicrobial activity against Escherichia coli and Staphylococcus aureus. In Heliofungia actiniformis (Mushroom coral), this protein is Peptide Hact-3.